The chain runs to 228 residues: uncharacterized protein (228 aa).

The segment at 194–228 is disordered; sequence SRRADEHPAPSTEPHAAAVAPEPDFMAEPIPALEE.

This is an uncharacterized protein from Treponema pallidum (strain Nichols).